A 156-amino-acid chain; its full sequence is Small ribosomal subunit protein uS7 (156 aa).

The protein belongs to the universal ribosomal protein uS7 family. In terms of assembly, part of the 30S ribosomal subunit. Contacts proteins S9 and S11.

Its function is as follows. One of the primary rRNA binding proteins, it binds directly to 16S rRNA where it nucleates assembly of the head domain of the 30S subunit. Is located at the subunit interface close to the decoding center, probably blocks exit of the E-site tRNA. The protein is Small ribosomal subunit protein uS7 of Rhodobacter capsulatus (Rhodopseudomonas capsulata).